The sequence spans 67 residues: Surface composition regulator (67 aa).

This sequence belongs to the GlgS family.

In terms of biological role, major determinant of cell surface composition. Negatively regulates motility, adhesion and synthesis of biofilm exopolysaccharides. This is Surface composition regulator from Salmonella paratyphi A (strain ATCC 9150 / SARB42).